A 141-amino-acid chain; its full sequence is Small ribosomal subunit protein bS6 (141 aa).

Residues 96–141 (VTGPSEMLKAEENRSERRERRERPEHADGAEGDDSNDSDNSDNADE) are disordered. Positions 103–124 (LKAEENRSERRERRERPEHADG) are enriched in basic and acidic residues. Residues 125–141 (AEGDDSNDSDNSDNADE) show a composition bias toward acidic residues.

This sequence belongs to the bacterial ribosomal protein bS6 family.

Binds together with bS18 to 16S ribosomal RNA. This chain is Small ribosomal subunit protein bS6, found in Pseudomonas entomophila (strain L48).